We begin with the raw amino-acid sequence, 228 residues long: 6-carboxyhexanoate--CoA ligase (228 aa).

This sequence belongs to the BioW family. As to quaternary structure, homodimer. The cofactor is Mg(2+).

The catalysed reaction is heptanedioate + ATP + CoA = 6-carboxyhexanoyl-CoA + AMP + diphosphate. It participates in metabolic intermediate metabolism; pimeloyl-CoA biosynthesis; pimeloyl-CoA from pimelate: step 1/1. Catalyzes the transformation of pimelate into pimeloyl-CoA with concomitant hydrolysis of ATP to AMP. This Staphylococcus epidermidis (strain ATCC 35984 / DSM 28319 / BCRC 17069 / CCUG 31568 / BM 3577 / RP62A) protein is 6-carboxyhexanoate--CoA ligase.